Here is a 148-residue protein sequence, read N- to C-terminus: Snaclec jerdonuxin subunit beta (148 aa).

The first 23 residues, 1–23, serve as a signal peptide directing secretion; it reads MVRFIFVSFGLLVVFLSLSGIGA. Intrachain disulfides connect C27/C38, C55/C144, and C121/C136. One can recognise a C-type lectin domain in the interval 34 to 145; that stretch reads YDEHCYQVFQ…CSSKRYIVCK (112 aa).

Belongs to the snaclec family. As to quaternary structure, tetramer of 4 heterodimers of alpha and beta subunits; disulfide-linked. In terms of tissue distribution, expressed by the venom gland.

It localises to the secreted. Its function is as follows. Snaclec that strongly induces platelet aggregation, in a dose-dependent manner. This is Snaclec jerdonuxin subunit beta from Protobothrops jerdonii (Jerdon's pitviper).